Reading from the N-terminus, the 649-residue chain is Ubiquitin-associated and SH3 domain-containing protein B (649 aa).

Position 20 is a phosphoserine (Ser20). Thr23 is subject to Phosphothreonine. Residues 27 to 76 (NRQQRPGTIKHGSALDVLLSMGFPRARAQKALASTGGRSVQAACDWLFSH) enclose the UBA domain. The region spanning 254–319 (ANHETLQVIY…PENYITKADE (66 aa)) is the SH3 domain. The tract at residues 380–649 (GPQKRCLFVC…FNWRETLLQE (270 aa)) is protein tyrosine phosphatase. Arg390 is an active-site residue. His391 serves as the catalytic Tele-phosphohistidine intermediate. Residue His576 is part of the active site.

As to quaternary structure, homodimer. Interacts with JAK2 (in vitro). Interacts with CBL. Part of a complex containing CBL and activated EGFR. Interacts with ubiquitin and with mono-ubiquitinated proteins. Interacts with ZAP70 (ubiquitinated form).

The protein resides in the cytoplasm. It is found in the nucleus. It carries out the reaction O-phospho-L-tyrosyl-[protein] + H2O = L-tyrosyl-[protein] + phosphate. Functionally, interferes with CBL-mediated down-regulation and degradation of receptor-type tyrosine kinases. Promotes accumulation of activated target receptors, such as T-cell receptors and EGFR, on the cell surface. Exhibits tyrosine phosphatase activity toward several substrates including EGFR, FAK, SYK, and ZAP70. Down-regulates proteins that are dually modified by both protein tyrosine phosphorylation and ubiquitination. In Homo sapiens (Human), this protein is Ubiquitin-associated and SH3 domain-containing protein B (UBASH3B).